Reading from the N-terminus, the 508-residue chain is Maturase K (508 aa).

This sequence belongs to the intron maturase 2 family. MatK subfamily.

It localises to the plastid. Its subcellular location is the chloroplast. Its function is as follows. Usually encoded in the trnK tRNA gene intron. Probably assists in splicing its own and other chloroplast group II introns. This chain is Maturase K, found in Abrus precatorius (Indian licorice).